Consider the following 778-residue polypeptide: Hyperosmolality-gated Ca2+ permeable channel 1.4 (778 aa).

Transmembrane regions (helical) follow at residues 7–27, 101–121, 158–178, 375–395, 427–447, 467–487, 512–532, 584–604, 626–646, and 651–671; these read IGLA…LFAI, IYLI…SILV, FWAH…VLMK, FVMH…IAFV, FLPG…LMIM, YYIF…SAFE, ATFF…GEIF, PVTP…YLVF, VHGR…GLMS, and VQST…HRFC. The interval 738–778 is disordered; sequence VVQTKRQRSRRTTVASSNASRGSSQSTPFNQLDLGKGKPET. Over residues 753–763 the composition is skewed to low complexity; sequence SSNASRGSSQS.

The protein belongs to the CSC1 (TC 1.A.17) family.

The protein resides in the membrane. In terms of biological role, acts as an osmosensitive calcium-permeable cation channel. This chain is Hyperosmolality-gated Ca2+ permeable channel 1.4, found in Arabidopsis thaliana (Mouse-ear cress).